A 335-amino-acid chain; its full sequence is Glycerol-3-phosphate dehydrogenase [NAD(P)+] (335 aa).

NADPH contacts are provided by Ser12, Trp13, and Lys107. 3 residues coordinate sn-glycerol 3-phosphate: Lys107, Gly138, and Ser140. Ala142 serves as a coordination point for NADPH. Sn-glycerol 3-phosphate contacts are provided by Lys193, Asp246, Ser256, Arg257, and Asn258. Residue Lys193 is the Proton acceptor of the active site. Arg257 contributes to the NADPH binding site. NADPH-binding residues include Val281 and Glu283.

This sequence belongs to the NAD-dependent glycerol-3-phosphate dehydrogenase family.

It is found in the cytoplasm. The catalysed reaction is sn-glycerol 3-phosphate + NAD(+) = dihydroxyacetone phosphate + NADH + H(+). It catalyses the reaction sn-glycerol 3-phosphate + NADP(+) = dihydroxyacetone phosphate + NADPH + H(+). It participates in membrane lipid metabolism; glycerophospholipid metabolism. Catalyzes the reduction of the glycolytic intermediate dihydroxyacetone phosphate (DHAP) to sn-glycerol 3-phosphate (G3P), the key precursor for phospholipid synthesis. The protein is Glycerol-3-phosphate dehydrogenase [NAD(P)+] of Geobacter sulfurreducens (strain ATCC 51573 / DSM 12127 / PCA).